Here is a 251-residue protein sequence, read N- to C-terminus: MLGTCLRLLVGVLCTVCSLGTARAYPDTSPLLGSNWGSLTHLYTATARTSYHLQIHRDGHVDGTPHQTIYSALMITSEDAGSVVITGAMTRRFLCMDLHGNIFGSLHFSPENCKFRQWTLENGYDVYLSQKHHYLVSLGRAKRIFQPGTNPPPFSQFLARRNEVPLLHFYTVRPRRHTRSAEDPPERDPLNVLKPRPRATPVPVSCSRELPSAEEGGPAASDPLGVLRRGRGDARGGAGGADRCRPFPRFV.

Residues 1 to 24 (MLGTCLRLLVGVLCTVCSLGTARA) form the signal peptide. Cysteine 95 and cysteine 113 are disulfide-bonded. O-linked (GalNAc) threonine glycans are attached at residues threonine 171 and threonine 178. The segment at 175-251 (RRHTRSAEDP…DRCRPFPRFV (77 aa)) is disordered. Residues 179–189 (RSAEDPPERDP) show a composition bias toward basic and acidic residues. The residue at position 180 (serine 180) is a Phosphoserine; by FAM20C.

Belongs to the heparin-binding growth factors family. Interacts with FGFR1. Interacts with FGFR2, FGFR3 and FGFR4. Affinity between fibroblast growth factors (FGFs) and their receptors is increased by KL and heparan sulfate glycosaminoglycans that function as coreceptors. Following secretion this protein is inactivated by cleavage into a N-terminal fragment and a C-terminal fragment. The processing is effected by proprotein convertases. In terms of processing, O-glycosylated at Thr-171 and Thr-178 by GALNT3 and glycosylation of Thr-178 requires previous glycosylation at Thr171. Glycosylation is necessary for secretion; it blocks processing by proprotein convertases when the O-glycan is alpha 2,6-sialylated. Competition between proprotein convertase cleavage and block of cleavage by O-glycosylation determines the level of secreted active FGF23. Post-translationally, phosphorylation at Ser-180 mediated by FAM20C slows down glycosylation at Thr-178 notably. Mainly expressed in the brain and thymus at low levels. In brain; preferentially expressed in the ventrolateral thalamic nucleus.

The protein localises to the secreted. Functionally, regulator of phosphate homeostasis. Inhibits renal tubular phosphate transport by reducing SLC34A1 levels. Acts directly on the parathyroid to decrease PTH secretion. Regulator of vitamin-D metabolism. Negatively regulates osteoblasts differentiation and matrix mineralization. Up-regulates EGR1 expression in the presence of KL. The chain is Fibroblast growth factor 23 (Fgf23) from Mus musculus (Mouse).